A 220-amino-acid chain; its full sequence is Large ribosomal subunit protein uL3 (220 aa).

Residues 130 to 156 (AIKRHGQSRGPMSHGSHFHRAPGSVGM) form a disordered region.

This sequence belongs to the universal ribosomal protein uL3 family. In terms of assembly, part of the 50S ribosomal subunit. Forms a cluster with proteins L14 and L19.

Its function is as follows. One of the primary rRNA binding proteins, it binds directly near the 3'-end of the 23S rRNA, where it nucleates assembly of the 50S subunit. The protein is Large ribosomal subunit protein uL3 of Staphylococcus aureus (strain Mu3 / ATCC 700698).